A 407-amino-acid chain; its full sequence is 3-oxoacyl-[acyl-carrier-protein] synthase 1 (407 aa).

Positions 1–405 (MKRVVITGLG…GTNVSLIIKK (405 aa)) constitute a Ketosynthase family 3 (KS3) domain. Residues Cys164, His299, and His335 each act as for beta-ketoacyl synthase activity in the active site.

The protein belongs to the thiolase-like superfamily. Beta-ketoacyl-ACP synthases family. In terms of assembly, homodimer.

The protein resides in the cytoplasm. The enzyme catalyses a fatty acyl-[ACP] + malonyl-[ACP] + H(+) = a 3-oxoacyl-[ACP] + holo-[ACP] + CO2. The catalysed reaction is (3Z)-decenoyl-[ACP] + malonyl-[ACP] + H(+) = 3-oxo-(5Z)-dodecenoyl-[ACP] + holo-[ACP] + CO2. It functions in the pathway lipid metabolism; fatty acid biosynthesis. Functionally, involved in the type II fatty acid elongation cycle. Catalyzes the elongation of a wide range of acyl-ACP by the addition of two carbons from malonyl-ACP to an acyl acceptor. Can also use unsaturated fatty acids. Catalyzes a key reaction in unsaturated fatty acid (UFA) synthesis, the elongation of the cis-3-decenoyl-ACP produced by FabA. The sequence is that of 3-oxoacyl-[acyl-carrier-protein] synthase 1 (fabB) from Buchnera aphidicola subsp. Baizongia pistaciae (strain Bp).